A 446-amino-acid polypeptide reads, in one-letter code: N-succinylarginine dihydrolase (446 aa).

Substrate contacts are provided by residues 19-28 (AGLSFGNVAS), asparagine 110, and 137-138 (HR). Residue glutamate 174 is part of the active site. Residue arginine 213 coordinates substrate. Histidine 249 is a catalytic residue. Substrate contacts are provided by aspartate 251 and asparagine 364. The active-site Nucleophile is the cysteine 370.

This sequence belongs to the succinylarginine dihydrolase family. Homodimer.

The enzyme catalyses N(2)-succinyl-L-arginine + 2 H2O + 2 H(+) = N(2)-succinyl-L-ornithine + 2 NH4(+) + CO2. Its pathway is amino-acid degradation; L-arginine degradation via AST pathway; L-glutamate and succinate from L-arginine: step 2/5. Catalyzes the hydrolysis of N(2)-succinylarginine into N(2)-succinylornithine, ammonia and CO(2). The sequence is that of N-succinylarginine dihydrolase from Burkholderia thailandensis (strain ATCC 700388 / DSM 13276 / CCUG 48851 / CIP 106301 / E264).